A 261-amino-acid polypeptide reads, in one-letter code: Glucosamine-6-phosphate deaminase (261 aa).

The Proton acceptor; for enolization step role is filled by Asp67. Asn136 (for ring-opening step) is an active-site residue. Residue His138 is the Proton acceptor; for ring-opening step of the active site. The active-site For ring-opening step is Glu143.

It belongs to the glucosamine/galactosamine-6-phosphate isomerase family. NagB subfamily.

It carries out the reaction alpha-D-glucosamine 6-phosphate + H2O = beta-D-fructose 6-phosphate + NH4(+). Its pathway is amino-sugar metabolism; N-acetylneuraminate degradation; D-fructose 6-phosphate from N-acetylneuraminate: step 5/5. Functionally, catalyzes the reversible isomerization-deamination of glucosamine 6-phosphate (GlcN6P) to form fructose 6-phosphate (Fru6P) and ammonium ion. This chain is Glucosamine-6-phosphate deaminase, found in Cutibacterium acnes (strain DSM 16379 / KPA171202) (Propionibacterium acnes).